Here is a 53-residue protein sequence, read N- to C-terminus: MPITLDPEKLAIVMKHKFQYKICRECGARNPPDAEKCRRCRSRNLRPKKFKKK.

Belongs to the eukaryotic ribosomal protein eL40 family.

This is Large ribosomal subunit protein eL40 from Pyrobaculum islandicum (strain DSM 4184 / JCM 9189 / GEO3).